The primary structure comprises 849 residues: Serine/threonine-protein phosphatase 4 regulatory subunit 3B (849 aa).

The WH1 domain maps to 1–100; it reads MSDTRRRVKV…DEIWEKICQV (100 aa). Residues Ser-117 and Ser-695 each carry the phosphoserine modification. A compositionally biased stretch (acidic residues) spans 714–724; the sequence is EMWFNEDEEEE. A disordered region spans residues 714-849; it reads EMWFNEDEEE…SPRKRPRLGS (136 aa). Basic and acidic residues predominate over residues 733–764; the sequence is EKPKPEDDFPDNYEKFMETKKAKESEDKENLP. The span at 776–818 shows a compositional bias: polar residues; it reads FSHSASAANGTNSKSVVAQIPPATSNGSSSKTTNLPTSVTATK. A compositionally biased stretch (acidic residues) spans 827-838; sequence YPDDEEEDEEEE. Ser-840 is subject to Phosphoserine.

It belongs to the SMEK family. As to quaternary structure, serine/threonine-protein phosphatase 4 (PP4) occurs in different assemblies of the catalytic and one or more regulatory subunits. Component of the PP4 complex PPP4C-PPP4R2-PPP4R3B. As to expression, moderately expressed in tissues and specific brain regions examined.

It localises to the cytoplasm. The protein localises to the cytoskeleton. It is found in the microtubule organizing center. The protein resides in the centrosome. Its subcellular location is the nucleus. Its function is as follows. Regulatory subunit of serine/threonine-protein phosphatase 4 (PP4). May regulate the activity of PPP4C at centrosomal microtubule organizing centers. The chain is Serine/threonine-protein phosphatase 4 regulatory subunit 3B from Homo sapiens (Human).